The primary structure comprises 137 residues: Small ribosomal subunit protein uS12 (137 aa).

Residues 1–57 (MPTINQLVRKPRKSKTKQSDSPVLNRGFNSKKKQFTNLNSPQKRGVCTRVGTMTPRK) form a disordered region. Position 102 is a 3-methylthioaspartic acid (aspartate 102). A disordered region spans residues 118–137 (SGVDGRRQGRSLYGTKKPKN).

It belongs to the universal ribosomal protein uS12 family. In terms of assembly, part of the 30S ribosomal subunit. Contacts proteins S8 and S17. May interact with IF1 in the 30S initiation complex.

With S4 and S5 plays an important role in translational accuracy. Its function is as follows. Interacts with and stabilizes bases of the 16S rRNA that are involved in tRNA selection in the A site and with the mRNA backbone. Located at the interface of the 30S and 50S subunits, it traverses the body of the 30S subunit contacting proteins on the other side and probably holding the rRNA structure together. The combined cluster of proteins S8, S12 and S17 appears to hold together the shoulder and platform of the 30S subunit. The sequence is that of Small ribosomal subunit protein uS12 from Staphylococcus epidermidis (strain ATCC 12228 / FDA PCI 1200).